Consider the following 169-residue polypeptide: UPF0303 protein BruAb1_1406 (169 aa).

Belongs to the UPF0303 family.

The polypeptide is UPF0303 protein BruAb1_1406 (Brucella abortus biovar 1 (strain 9-941)).